Here is a 233-residue protein sequence, read N- to C-terminus: MRRVLLKISGERLAARGVSVHDAEVIGMLARGIKRVHEMGIQVCLVIGGGNIYRGSSGIPNIDRATGDYMGMLATVINALALQGAINNLGVVSRVQSAIPMRSICEPYVRQKAISHMEKNRIVIFAAGTGNPFFTTDTAAVLRSVEMGCDVMLKGTLVDGIYSDDPRTNINAERITKLSYTDVLSKKLRVLDSSAVSIARDNGMPVVIFSLDSEMAFYEVINKQGNYSTIEGE.

Residue 7 to 10 coordinates ATP; it reads KISG. Glycine 49 is a binding site for UMP. ATP-binding residues include glycine 50 and arginine 54. UMP-binding positions include aspartate 68 and 129–136; that span reads TGNPFFTT. 3 residues coordinate ATP: threonine 156, tyrosine 162, and aspartate 165.

It belongs to the UMP kinase family. In terms of assembly, homohexamer.

Its subcellular location is the cytoplasm. It catalyses the reaction UMP + ATP = UDP + ADP. It participates in pyrimidine metabolism; CTP biosynthesis via de novo pathway; UDP from UMP (UMPK route): step 1/1. Its activity is regulated as follows. Inhibited by UTP. Catalyzes the reversible phosphorylation of UMP to UDP. In Neorickettsia sennetsu (strain ATCC VR-367 / Miyayama) (Ehrlichia sennetsu), this protein is Uridylate kinase.